The primary structure comprises 323 residues: L-lactate dehydrogenase (323 aa).

NAD(+) is bound by residues Val11, Asp32, and Tyr63. Substrate-binding residues include Gln80 and Arg86. NAD(+) is bound by residues Ser99, 116–118 (VSN), and Ser141. Residue 118–121 (NPVD) coordinates substrate. A substrate-binding site is contributed by 146 to 149 (DTAR). Positions 151 and 166 each coordinate beta-D-fructose 1,6-bisphosphate. Catalysis depends on His173, which acts as the Proton acceptor. A Phosphotyrosine modification is found at Tyr221. Thr230 contributes to the substrate binding site.

The protein belongs to the LDH/MDH superfamily. LDH family. In terms of assembly, homotetramer.

The protein localises to the cytoplasm. The catalysed reaction is (S)-lactate + NAD(+) = pyruvate + NADH + H(+). The protein operates within fermentation; pyruvate fermentation to lactate; (S)-lactate from pyruvate: step 1/1. With respect to regulation, allosterically activated by fructose 1,6-bisphosphate (FBP). In terms of biological role, catalyzes the conversion of lactate to pyruvate. This is L-lactate dehydrogenase from Kosmotoga olearia (strain ATCC BAA-1733 / DSM 21960 / TBF 19.5.1).